The following is a 173-amino-acid chain: Crossover junction endodeoxyribonuclease RuvC (173 aa).

Residues Asp-8, Glu-67, and Asp-139 contribute to the active site. Mg(2+) is bound by residues Asp-8, Glu-67, and Asp-139.

The protein belongs to the RuvC family. Homodimer which binds Holliday junction (HJ) DNA. The HJ becomes 2-fold symmetrical on binding to RuvC with unstacked arms; it has a different conformation from HJ DNA in complex with RuvA. In the full resolvosome a probable DNA-RuvA(4)-RuvB(12)-RuvC(2) complex forms which resolves the HJ. Requires Mg(2+) as cofactor.

It is found in the cytoplasm. It catalyses the reaction Endonucleolytic cleavage at a junction such as a reciprocal single-stranded crossover between two homologous DNA duplexes (Holliday junction).. The RuvA-RuvB-RuvC complex processes Holliday junction (HJ) DNA during genetic recombination and DNA repair. Endonuclease that resolves HJ intermediates. Cleaves cruciform DNA by making single-stranded nicks across the HJ at symmetrical positions within the homologous arms, yielding a 5'-phosphate and a 3'-hydroxyl group; requires a central core of homology in the junction. The consensus cleavage sequence is 5'-(A/T)TT(C/G)-3'. Cleavage occurs on the 3'-side of the TT dinucleotide at the point of strand exchange. HJ branch migration catalyzed by RuvA-RuvB allows RuvC to scan DNA until it finds its consensus sequence, where it cleaves and resolves the cruciform DNA. In terms of biological role, plays a role in recovery after DNA ADP-ribosylation, probably via replication fork reversal. In Escherichia coli O127:H6 (strain E2348/69 / EPEC), this protein is Crossover junction endodeoxyribonuclease RuvC.